Reading from the N-terminus, the 319-residue chain is L-lactate dehydrogenase 2 (319 aa).

NAD(+) contacts are provided by residues V17, D38, K43, Y69, and 83-84 (GA). Positions 86 and 92 each coordinate substrate. Residues S105, 122–124 (ATN), and S147 contribute to the NAD(+) site. Residue 124–127 (NPVD) coordinates substrate. 152–155 (DSGR) is a binding site for substrate. R157 and H172 together coordinate beta-D-fructose 1,6-bisphosphate. The active-site Proton acceptor is H179. Y224 bears the Phosphotyrosine mark. Substrate is bound at residue T233.

It belongs to the LDH/MDH superfamily. LDH family. As to quaternary structure, homotetramer.

The protein resides in the cytoplasm. It carries out the reaction (S)-lactate + NAD(+) = pyruvate + NADH + H(+). It participates in fermentation; pyruvate fermentation to lactate; (S)-lactate from pyruvate: step 1/1. Allosterically activated by fructose 1,6-bisphosphate (FBP). Functionally, catalyzes the conversion of lactate to pyruvate. The protein is L-lactate dehydrogenase 2 of Peribacillus psychrosaccharolyticus (Bacillus psychrosaccharolyticus).